The following is a 213-amino-acid chain: LexA repressor (213 aa).

Residues 29 to 49 constitute a DNA-binding region (H-T-H motif); the sequence is VREICNAVGFKSTSTVHSYLE. Residues Ser136 and Lys173 each act as for autocatalytic cleavage activity in the active site.

This sequence belongs to the peptidase S24 family. In terms of assembly, homodimer.

The enzyme catalyses Hydrolysis of Ala-|-Gly bond in repressor LexA.. In terms of biological role, represses a number of genes involved in the response to DNA damage (SOS response), including recA and lexA. In the presence of single-stranded DNA, RecA interacts with LexA causing an autocatalytic cleavage which disrupts the DNA-binding part of LexA, leading to derepression of the SOS regulon and eventually DNA repair. The protein is LexA repressor of Acetivibrio thermocellus (strain ATCC 27405 / DSM 1237 / JCM 9322 / NBRC 103400 / NCIMB 10682 / NRRL B-4536 / VPI 7372) (Clostridium thermocellum).